The sequence spans 366 residues: Chitoporin (366 aa).

A signal peptide spans 1–23 (MDKMFKRTVIGAAVALASTGLMA).

Belongs to the Gram-negative porin family.

The protein localises to the cell outer membrane. Its function is as follows. Involved in the uptake of chitosugars. This is Chitoporin (chiP) from Vibrio furnissii.